Here is a 146-residue protein sequence, read N- to C-terminus: Ribosomal RNA large subunit methyltransferase H (146 aa).

Residues leucine 62, glycine 94, and 113 to 118 (LGELTL) contribute to the S-adenosyl-L-methionine site.

The protein belongs to the RNA methyltransferase RlmH family. In terms of assembly, homodimer.

Its subcellular location is the cytoplasm. The catalysed reaction is pseudouridine(1915) in 23S rRNA + S-adenosyl-L-methionine = N(3)-methylpseudouridine(1915) in 23S rRNA + S-adenosyl-L-homocysteine + H(+). Its function is as follows. Specifically methylates the pseudouridine at position 1915 (m3Psi1915) in 23S rRNA. In Deinococcus radiodurans (strain ATCC 13939 / DSM 20539 / JCM 16871 / CCUG 27074 / LMG 4051 / NBRC 15346 / NCIMB 9279 / VKM B-1422 / R1), this protein is Ribosomal RNA large subunit methyltransferase H.